Consider the following 1016-residue polypeptide: Primary septum glucan endo-1,3-beta-D-glucosidase (1016 aa).

The first 20 residues, 1-20 (MSSYLRSFIFGLLTISLAQC), serve as a signal peptide directing secretion. Asn37 is a glycosylation site (N-linked (GlcNAc...) asparagine). Positions 45 to 272 (TNVFDSVVDT…NGYIQIAKIP (228 aa)) are beta-sandwich subdomain. In terms of domain architecture, GH81 spans 45–741 (TNVFDSVVDT…AYAAGLWAND (697 aa)). Residues 273–364 (LGDGTAEALY…AGNSITFAEA (92 aa)) form an alpha/beta subdomain region. Positions 379-741 (GQIGYSEEAL…AYAAGLWAND (363 aa)) are (alpha/beta)6 barrel subdomain. Residue Asp492 is part of the active site. Positions 496, 567, 569, 573, and 650 each coordinate (1,3-beta-D-glucosyl)n. Catalysis depends on residues Glu569 and Glu573. Residues 748-1016 (SSSSTTTTST…GCSNGALVAA (269 aa)) form a required for catalytic activity against insoluble beta-glucan and to restrict localization of the enzyme to the cell septum region. The disordered stretch occupies residues 844–872 (SSTTSSITPTPTTTSSITPTPTTTSTTTT).

Belongs to the glycosyl hydrolase 81 family.

Its subcellular location is the cell septum. It catalyses the reaction Hydrolysis of (1-&gt;3)-beta-D-glucosidic linkages in (1-&gt;3)-beta-D-glucans.. Cleaves internal linkages in 1,3-beta-glucan. Has a role in cell separation where it is required for the degradation of the primary septum after completion of cytokinesis. This is Primary septum glucan endo-1,3-beta-D-glucosidase from Schizosaccharomyces pombe (strain 972 / ATCC 24843) (Fission yeast).